We begin with the raw amino-acid sequence, 318 residues long: Protoheme IX farnesyltransferase (318 aa).

Helical transmembrane passes span 33–53 (VMSLVVFTALVGLVAAPVSVH), 54–74 (PFIGFCAILFIAIGGGASGAL), 102–122 (GEALALGLGLSGLSVMMLALA), 125–145 (VLAGAFLAFTIFFYVVVYTMW), 154–174 (IVIGGAAGAFPPVIGWIAATG), 181–201 (WLMFALTFMWTPPHFWALALF), 225–245 (VHILIYTILLALLALGTAFSN), 246–266 (IGGPIYLAVALVLNALFLLGA), and 288–308 (FFKLSLLYLFLHFGAILAEAL).

Belongs to the UbiA prenyltransferase family. Protoheme IX farnesyltransferase subfamily. Interacts with CtaA.

Its subcellular location is the cell inner membrane. The catalysed reaction is heme b + (2E,6E)-farnesyl diphosphate + H2O = Fe(II)-heme o + diphosphate. The protein operates within porphyrin-containing compound metabolism; heme O biosynthesis; heme O from protoheme: step 1/1. Functionally, converts heme B (protoheme IX) to heme O by substitution of the vinyl group on carbon 2 of heme B porphyrin ring with a hydroxyethyl farnesyl side group. The polypeptide is Protoheme IX farnesyltransferase (Ruegeria pomeroyi (strain ATCC 700808 / DSM 15171 / DSS-3) (Silicibacter pomeroyi)).